A 340-amino-acid chain; its full sequence is Glycerol-3-phosphate dehydrogenase [NAD(P)+] (340 aa).

NADPH is bound by residues Ser13, Trp14, and Lys108. The sn-glycerol 3-phosphate site is built by Lys108, Gly139, and Ser141. Ala143 contributes to the NADPH binding site. Positions 194, 247, 257, 258, and 259 each coordinate sn-glycerol 3-phosphate. Catalysis depends on Lys194, which acts as the Proton acceptor. Arg258 contacts NADPH. Val282 and Glu284 together coordinate NADPH.

This sequence belongs to the NAD-dependent glycerol-3-phosphate dehydrogenase family.

Its subcellular location is the cytoplasm. It catalyses the reaction sn-glycerol 3-phosphate + NAD(+) = dihydroxyacetone phosphate + NADH + H(+). It carries out the reaction sn-glycerol 3-phosphate + NADP(+) = dihydroxyacetone phosphate + NADPH + H(+). It participates in membrane lipid metabolism; glycerophospholipid metabolism. Catalyzes the reduction of the glycolytic intermediate dihydroxyacetone phosphate (DHAP) to sn-glycerol 3-phosphate (G3P), the key precursor for phospholipid synthesis. This is Glycerol-3-phosphate dehydrogenase [NAD(P)+] from Streptococcus thermophilus (strain ATCC BAA-491 / LMD-9).